The sequence spans 428 residues: Endoplasmic reticulum junction formation protein lunapark (428 aa).

Gly2 is lipidated: N-myristoyl glycine. Residues 2-45 (GGLFSRWRTKPSTVEVLESIDKEIQALEEFREKNQRLQKLWVGR) are Cytoplasmic-facing. Residues 16–41 (EVLESIDKEIQALEEFREKNQRLQKL) adopt a coiled-coil conformation. The chain crosses the membrane as a helical span at residues 46 to 66 (LILYSSVLYLFTCLIVYLWYL). The Lumenal segment spans residues 67–77 (PDEFTARLAMT). A helical membrane pass occupies residues 78 to 98 (LPFFAFPLIIWSIRTVIIFFF). Over 99–428 (SKRTERNNEA…ELSGESLTAE (330 aa)) the chain is Cytoplasmic. Residues 102–128 (TERNNEALDDLKSQRKKILEEVMEKET) adopt a coiled-coil conformation. Phosphoserine occurs at positions 114, 153, 177, 182, and 194. The disordered stretch occupies residues 143–247 (SKKAKECEPP…HPPGPPLARP (105 aa)). A compositionally biased stretch (pro residues) spans 185-198 (QGPPPQVPVSPGPP). Thr211 and Thr213 each carry phosphothreonine. 2 positions are modified to phosphoserine: Ser217 and Ser227. The C4-type; plays a role in ER morphology zinc-finger motif lies at 276–301 (CQQCFSHNGMALKEEFEYIAFRCAYC). 3 positions are modified to phosphoserine: Ser321, Ser353, and Ser384. A disordered region spans residues 356–428 (HDVLDDNTEQ…ELSGESLTAE (73 aa)). A compositionally biased stretch (acidic residues) spans 386–401 (SEEPEEKQETENEEAS). The residue at position 414 (Ser414) is a Phosphoserine.

This sequence belongs to the lunapark family. Homodimer; homodimerization requires the C4-type zinc finger motif and decreases during mitosis in a phosphorylation-dependent manner. In terms of processing, myristoylated; myristoylation is necessary for the endoplasmic reticulum (ER) three-way ER tubular junction formation, but is not required neither for membrane translocation, membrane topology formation, nor for the specific localization to ER membranes. Post-translationally, phosphorylated. Phosphorylation occurs at Ser-177, Ser-182, Ser-217, Ser-227, Ser-321 and Ser-384 during interphase. Phosphorylation occurs at Ser-114, Ser-153, Ser-194, Thr-211 and Ser-353 during mitosis; these phosphorylations reduce both its homodimerization and the ER three-way tubular junction formation. Subject to proteasomal degradation following phosphorylation during mitosis. In terms of tissue distribution, expressed in neural precursor cells, where it is detected at the growth-cone-like structure and branching sites of neurite-like processes.

The protein resides in the endoplasmic reticulum membrane. Functionally, endoplasmic reticulum (ER)-shaping membrane protein that plays a role in determining ER morphology. Involved in the stabilization of nascent three-way ER tubular junctions within the ER network. May also play a role as a curvature-stabilizing protein within the three-way ER tubular junction network. May be involved in limb development. Is involved in central nervous system development. This Homo sapiens (Human) protein is Endoplasmic reticulum junction formation protein lunapark.